A 352-amino-acid chain; its full sequence is Protein pelota homolog (352 aa).

It belongs to the eukaryotic release factor 1 family. Pelota subfamily. Monomer. A divalent metal cation serves as cofactor.

It localises to the cytoplasm. Functionally, may function in recognizing stalled ribosomes, interact with stem-loop structures in stalled mRNA molecules, and effect endonucleolytic cleavage of the mRNA. May play a role in the release non-functional ribosomes and degradation of damaged mRNAs. Has endoribonuclease activity. The sequence is that of Protein pelota homolog from Thermofilum pendens (strain DSM 2475 / Hrk 5).